A 599-amino-acid chain; its full sequence is Endoribonuclease ZC3H12A (599 aa).

Residues 1–40 (MSGPCGEKPVLEASPTMSLWEFEDSHSRQGTPRPGQELAA) form a disordered region. The segment at 42-87 (EASALELQMKVDFFRKLGYSSTEIHSVLQKLGVQADTNTVLGELVK) is ubiquitin association domain. The segment at 81-150 (VLGELVKHGT…DGSNVAMSHG (70 aa)) is necessary for interaction with TANK. The segment at 90 to 133 (TATERERQTSPDPCPQLPLVPRGGGTPKAPNLEPPLPEEEKEGS) is disordered. Ser99 is subject to Phosphoserine. Residues 112 to 297 (GGGTPKAPNL…LDNFLRKKPL (186 aa)) form an RNase region. An RNase NYN domain is found at 135–290 (LRPVVIDGSN…LGRHGPSLDN (156 aa)). Positions 214 to 220 (RRVGGKR) are RNA binding. Asp226 provides a ligand contact to Mg(2+). The C3H1-type zinc-finger motif lies at 301–324 (HRKQPCPYGRKCTYGIKCRFFHPE). The interval 301 to 457 (HRKQPCPYGR…SELWGVRGGG (157 aa)) is necessary for interaction with ZC3H12D. Residues 343 to 420 (LSPPRAPSKD…SGSSFGPTDW (78 aa)) are disordered. The residue at position 344 (Ser344) is a Phosphoserine. Residues 358–375 (PSPSSQSSSLLTESEQCS) are compositionally biased toward low complexity. Positions 386–399 (SPGSRQEGLTQTYA) are enriched in polar residues. Phosphoserine is present on residues Ser438 and Ser442. The interval 522–546 (PPPTSVLQEPPVQSPGAGRSPWGRA) is disordered.

The protein belongs to the ZC3H12 family. As to quaternary structure, oligomer. Found in a deubiquitination complex with TANK, USP10 and ZC3H12A; this complex inhibits genotoxic stress- or interleukin-1-beta-mediated NF-kappaB activation by promoting IKBKG or TRAF6 deubiquitination. Interacts with IKBKG; this interaction increases in response to DNA damage. Interacts with TANK; this interaction increases in response to DNA damage and serves as a bridge to anchor both TANK and USP10 into a deubiquitinating complex. Interacts with TRAF6; this interaction increases in response to DNA damage and is stimulated by TANK. Interacts with USP10; this interaction increases in response to DNA damage and serves as a bridge to anchor both TANK and USP10 into a deubiquitinating complex. Interacts with ZC3H12D. Interacts with TNRC6A. Interacts with IKBKB/IKKB. Interacts with IKBKB/IKKB. Interacts with BTRC; the interaction occurs when ZC3H12A is phosphorylated in a IKBKB/IKKB-dependent manner. Interacts with IRAK1; this interaction increases the interaction between ZC3H12A and IKBKB/IKKB. Interacts with UPF1; this interaction occurs in a mRNA translationally active- and termination-dependent manner and is essential for ZC3H12A-mediated degradation of target mRNAs. Associates with ribosomes. Interacts with ubiquitin. (Microbial infection) Oligomerization is necessary for antiviral activity. Mg(2+) is required as a cofactor. Post-translationally, phosphorylated by IRAK1; phosphorylation is necessary for subsequent phosphorylation by the I-kappa-B-kinase (IKK) complex. Phosphorylated by I-kappa-B-kinase (IKK) subunits IKBKB/IKKB and CHUK/IKKA at Ser-438 and Ser-442; these phosphorylations promote ubiquitin proteasome-mediated degradation of ZC3H12A and hence facilitates rapid and robust production of IL-6 mRNA in response to toll-like receptor (TLR) or IL-1 receptor stimuli. In terms of processing, (Microbial infection) Rapidly degraded in activated T-cells in response to phorbol 13-acetate 12-myristate (PMA) during HIV-1 viral infection. Ubiquitinated; ubiquitination is induced in response to interleukin IL1 receptor stimuli in a IKBKB/IKKB and IRAK1-dependent manner, leading to proteasome-mediated degradation. Post-translationally, proteolytically cleaved between Arg-111 and Arg-214 by MALT1 in activated T-cells; cleavage at Arg-111 is critical for promoting ZC3H12A degradation in response to T-cell receptor (TCR) stimulation, and hence is necessary for prolonging the stability of a set of mRNAs controlling T-cell activation and Th17 cell differentiation. As to expression, expressed in heart, placenta, spleen, kidney, liver and lung. Expressed in leukocytes. Expressed in monocyte.

It localises to the nucleus. It is found in the cytoplasm. Its subcellular location is the P-body. The protein localises to the rough endoplasmic reticulum membrane. The protein resides in the cytoplasmic granule. Its function is as follows. Endoribonuclease involved in various biological functions such as cellular inflammatory response and immune homeostasis, glial differentiation of neuroprogenitor cells, cell death of cardiomyocytes, adipogenesis and angiogenesis. Functions as an endoribonuclease involved in mRNA decay. Modulates the inflammatory response by promoting the degradation of a set of translationally active cytokine-induced inflammation-related mRNAs, such as IL6 and IL12B, during the early phase of inflammation. Prevents aberrant T-cell-mediated immune reaction by degradation of multiple mRNAs controlling T-cell activation, such as those encoding cytokines (IL6 and IL2), cell surface receptors (ICOS, TNFRSF4 and TNFR2) and transcription factor (REL). Inhibits cooperatively with ZC3H12A the differentiation of helper T cells Th17 in lungs. They repress target mRNA encoding the Th17 cell-promoting factors IL6, ICOS, REL, IRF4, NFKBID and NFKBIZ. The cooperation requires RNA-binding by RC3H1 and the nuclease activity of ZC3H12A. Together with RC3H1, destabilizes TNFRSF4/OX40 mRNA by binding to the conserved stem loop structure in its 3'UTR. Self regulates by destabilizing its own mRNA. Cleaves mRNA harboring a stem-loop (SL), often located in their 3'-UTRs, during the early phase of inflammation in a helicase UPF1-dependent manner. Plays a role in the inhibition of microRNAs (miRNAs) biogenesis. Cleaves the terminal loop of a set of precursor miRNAs (pre-miRNAs) important for the regulation of the inflammatory response leading to their degradation, and thus preventing the biosynthesis of mature miRNAs. Also plays a role in promoting angiogenesis in response to inflammatory cytokines by inhibiting the production of antiangiogenic microRNAs via its anti-dicer RNase activity. Affects the overall ubiquitination of cellular proteins. Positively regulates deubiquitinase activity promoting the cleavage at 'Lys-48'- and 'Lys-63'-linked polyubiquitin chains on TNF receptor-associated factors (TRAFs), preventing JNK and NF-kappa-B signaling pathway activation, and hence negatively regulating macrophage-mediated inflammatory response and immune homeostasis. Also induces deubiquitination of the transcription factor HIF1A, probably leading to its stabilization and nuclear import, thereby positively regulating the expression of proangiogenic HIF1A-targeted genes. Involved in a TANK-dependent negative feedback response to attenuate NF-kappaB activation through the deubiquitination of IKBKG or TRAF6 in response to interleukin-1-beta (IL1B) stimulation or upon DNA damage. Prevents stress granule (SGs) formation and promotes macrophage apoptosis under stress conditions, including arsenite-induced oxidative stress, heat shock and energy deprivation. Plays a role in the regulation of macrophage polarization; promotes IL4-induced polarization of macrophages M1 into anti-inflammatory M2 state. May also act as a transcription factor that regulates the expression of multiple genes involved in inflammatory response, angiogenesis, adipogenesis and apoptosis. Functions as a positive regulator of glial differentiation of neuroprogenitor cells through an amyloid precursor protein (APP)-dependent signaling pathway. Attenuates septic myocardial contractile dysfunction in response to lipopolysaccharide (LPS) by reducing I-kappa-B-kinase (IKK)-mediated NF-kappa-B activation, and hence myocardial pro-inflammatory cytokine production. In terms of biological role, (Microbial infection) Binds to Japanese encephalitis virus (JEV) and Dengue virus (DEN) RNAs. Functionally, (Microbial infection) Exhibits antiviral activity against HIV-1 in lymphocytes by decreasing the abundance of HIV-1 viral RNA species. In Homo sapiens (Human), this protein is Endoribonuclease ZC3H12A.